A 406-amino-acid polypeptide reads, in one-letter code: Serine/threonine transporter SstT (406 aa).

9 consecutive transmembrane segments (helical) span residues 15-35, 47-67, 81-101, 140-160, 191-211, 215-235, 289-309, 315-335, and 362-382; these read LVLQILVGIILGISLALVSPS, FVGALKAIAPILVFILVAASI, IIAMYLAGTFFAALTAVVLSF, ALMSANYIGILAWGVGLGLAL, FGIFGLVASTFATTGFDALAG, LLVVLLSAMAIIALIVNPAMV, IPLGATINMAGAAITITTLTL, MGIEVDLMTAILLSVVAAVSA, and IAMQVVAVGFIIGVIQDSAET.

It belongs to the dicarboxylate/amino acid:cation symporter (DAACS) (TC 2.A.23) family.

It localises to the cell inner membrane. The catalysed reaction is L-serine(in) + Na(+)(in) = L-serine(out) + Na(+)(out). It catalyses the reaction L-threonine(in) + Na(+)(in) = L-threonine(out) + Na(+)(out). Functionally, involved in the import of serine and threonine into the cell, with the concomitant import of sodium (symport system). The protein is Serine/threonine transporter SstT of Vibrio vulnificus (strain CMCP6).